The following is a 292-amino-acid chain: MAEAQNDPLLPGYSFNAHLVAGLTPIEANGYLDFFIDRPLGMKGYILNLTIRGQGVVKNQGREFVCRPGDILLFPPGEIHHYGRHPEAREWYHQWVYFRPRAYWHEWLNWPSIFANTGFFRPDEAHQPHFSDLFGQIINAGQGEGRYSELLAINLLEQLLLRRMEAINESLHPPMDNRVREACQYISDHLADSNFDIASVAQHVCLSPSRLSHLFRQQLGISVLSWREDQRISQAKLLLSTTRMPIATVGRNVGFDDQLYFSRVFKKCTGASPSEFRAGCEEKVNDVAVKLS.

Alpha-L-arabinopyanose is bound by residues proline 8, threonine 24, arginine 38, tyrosine 82, and histidine 93. An HTH araC/xylS-type domain is found at 180–279; sequence REACQYISDH…GASPSEFRAG (100 aa). DNA-binding regions (H-T-H motif) lie at residues 198–219 and 246–269; these read ASVA…RQQL and IATV…KKCT.

As to quaternary structure, homodimer.

It is found in the cytoplasm. Arabinose converts the repressor form of AraC to the activator form to regulate the araBAD promoter. In the absence of arabinose, AraC binds to the araO2 and araI1 half-sites in the promoter region of the araBAD operon, leading to the formation of a DNA loop that blocks access of RNA polymerase to the promoter. In the presence of arabinose and the cyclic AMP receptor protein (CRP), it binds to the adjacent half-sites araI1 and araI2, leading to the binding of RNA polymerase to the promoter region and transcription of the araBAD operon. AraI1 acts as a switch mechanism allowing both the repressor and the activator forms of AraC protein to regulate the araBAD promoter. Inhibited by D-fucose, which binds competitively to the same site on the protein. Functionally, transcription factor that regulates the expression of several genes involved in the transport and metabolism of L-arabinose. Functions both as a positive and a negative regulator. In the presence of arabinose, activates the expression of the araBAD, araE, araFGH and araJ promoters. In the absence of arabinose, negatively regulates the araBAD operon. Represses its own transcription. Acts by binding directly to DNA. This is Arabinose operon regulatory protein from Escherichia coli (strain K12).